Consider the following 731-residue polypeptide: Catalase-peroxidase (731 aa).

A cross-link (tryptophyl-tyrosyl-methioninium (Trp-Tyr) (with M-252)) is located at residues Trp98 to Tyr226. The active-site Proton acceptor is the His99. The segment at residues Tyr226–Met252 is a cross-link (tryptophyl-tyrosyl-methioninium (Tyr-Met) (with W-98)). His267 serves as a coordination point for heme b.

It belongs to the peroxidase family. Peroxidase/catalase subfamily. Homodimer or homotetramer. The cofactor is heme b. Post-translationally, formation of the three residue Trp-Tyr-Met cross-link is important for the catalase, but not the peroxidase activity of the enzyme.

The catalysed reaction is H2O2 + AH2 = A + 2 H2O. It carries out the reaction 2 H2O2 = O2 + 2 H2O. Bifunctional enzyme with both catalase and broad-spectrum peroxidase activity. The chain is Catalase-peroxidase from Ruegeria pomeroyi (strain ATCC 700808 / DSM 15171 / DSS-3) (Silicibacter pomeroyi).